A 279-amino-acid polypeptide reads, in one-letter code: Aspartate/glutamate leucyltransferase (279 aa).

The segment at 245–279 (ARERGARPPRGPGALKDACDLPLSDAQPADIEDLD) is disordered.

Belongs to the R-transferase family. Bpt subfamily.

Its subcellular location is the cytoplasm. It catalyses the reaction N-terminal L-glutamyl-[protein] + L-leucyl-tRNA(Leu) = N-terminal L-leucyl-L-glutamyl-[protein] + tRNA(Leu) + H(+). It carries out the reaction N-terminal L-aspartyl-[protein] + L-leucyl-tRNA(Leu) = N-terminal L-leucyl-L-aspartyl-[protein] + tRNA(Leu) + H(+). Functions in the N-end rule pathway of protein degradation where it conjugates Leu from its aminoacyl-tRNA to the N-termini of proteins containing an N-terminal aspartate or glutamate. This Caulobacter vibrioides (strain ATCC 19089 / CIP 103742 / CB 15) (Caulobacter crescentus) protein is Aspartate/glutamate leucyltransferase.